Reading from the N-terminus, the 186-residue chain is Elongation factor P (186 aa).

It belongs to the elongation factor P family.

It is found in the cytoplasm. Its pathway is protein biosynthesis; polypeptide chain elongation. Involved in peptide bond synthesis. Stimulates efficient translation and peptide-bond synthesis on native or reconstituted 70S ribosomes in vitro. Probably functions indirectly by altering the affinity of the ribosome for aminoacyl-tRNA, thus increasing their reactivity as acceptors for peptidyl transferase. This is Elongation factor P from Coprothermobacter proteolyticus (strain ATCC 35245 / DSM 5265 / OCM 4 / BT).